A 94-amino-acid polypeptide reads, in one-letter code: CRISPR-associated endoribonuclease Cas2 (94 aa).

Asp-11 serves as a coordination point for Mg(2+).

The protein belongs to the CRISPR-associated endoribonuclease Cas2 protein family. As to quaternary structure, homodimer, forms a heterotetramer with a Cas1 homodimer. Mg(2+) serves as cofactor.

In terms of biological role, CRISPR (clustered regularly interspaced short palindromic repeat), is an adaptive immune system that provides protection against mobile genetic elements (viruses, transposable elements and conjugative plasmids). CRISPR clusters contain sequences complementary to antecedent mobile elements and target invading nucleic acids. CRISPR clusters are transcribed and processed into CRISPR RNA (crRNA). Functions as a ssRNA-specific endoribonuclease. Involved in the integration of spacer DNA into the CRISPR cassette. In Thermus thermophilus (strain ATCC 27634 / DSM 579 / HB8), this protein is CRISPR-associated endoribonuclease Cas2.